The primary structure comprises 668 residues: MAP kinase kinase PBS2 (668 aa).

Residues 1-15 (MEDKFANLSLHEKTG) are compositionally biased toward basic and acidic residues. Disordered regions lie at residues 1 to 43 (MEDK…SSHY), 61 to 120 (RALK…ASSK), and 181 to 313 (NPNR…GSSG). Polar residues-rich tracts occupy residues 16 to 43 (KSSI…SSHY), 68 to 91 (SVGS…QQIV), and 104 to 120 (SKVS…ASSK). Serine 68 carries the post-translational modification Phosphoserine. Low complexity predominate over residues 239–250 (AQQPQQFAPSPS). Serine 269 is modified (phosphoserine). Polar residues predominate over residues 270-300 (NPGSLINGVQSTSTSSSTEGPHDTVGTTPRT). Residues 301–310 (GNSNNSSNSG) show a composition bias toward low complexity. Residues 360–623 (LEFLDELGHG…YAALTEHPWL (264 aa)) form the Protein kinase domain. Residues 366 to 374 (LGHGNYGNV) and lysine 389 contribute to the ATP site. The Proton acceptor role is filled by aspartate 485. Serine 514 carries the phosphoserine modification. Threonine 518 carries the post-translational modification Phosphothreonine.

Belongs to the protein kinase superfamily. STE Ser/Thr protein kinase family. MAP kinase kinase subfamily. Interacts with NBP2, PTC1, SHO1 and STE11. Activated by phosphorylation by SSK2 or SSK22. Ser/Thr phosphorylation is also necessary for SHO1-mediated activation.

Its subcellular location is the cytoplasm. It carries out the reaction L-seryl-[protein] + ATP = O-phospho-L-seryl-[protein] + ADP + H(+). It catalyses the reaction L-threonyl-[protein] + ATP = O-phospho-L-threonyl-[protein] + ADP + H(+). The enzyme catalyses L-tyrosyl-[protein] + ATP = O-phospho-L-tyrosyl-[protein] + ADP + H(+). Functionally, kinase involved in a signal transduction pathway that is activated by changes in the osmolarity of the extracellular environment. Activates the MAP kinase HOG1 by concomitant phosphorylation at 'Thr-174' and 'Tyr-176'. The chain is MAP kinase kinase PBS2 (PBS2) from Saccharomyces cerevisiae (strain ATCC 204508 / S288c) (Baker's yeast).